A 98-amino-acid polypeptide reads, in one-letter code: NADH-ubiquinone oxidoreductase chain 4L (98 aa).

A run of 3 helical transmembrane segments spans residues 1 to 21 (MTLT…GMLT), 27 to 47 (VASL…ATLI), and 61 to 81 (IILL…LISI).

The protein belongs to the complex I subunit 4L family. Core subunit of respiratory chain NADH dehydrogenase (Complex I) which is composed of 45 different subunits.

It localises to the mitochondrion inner membrane. It catalyses the reaction a ubiquinone + NADH + 5 H(+)(in) = a ubiquinol + NAD(+) + 4 H(+)(out). Functionally, core subunit of the mitochondrial membrane respiratory chain NADH dehydrogenase (Complex I) which catalyzes electron transfer from NADH through the respiratory chain, using ubiquinone as an electron acceptor. Part of the enzyme membrane arm which is embedded in the lipid bilayer and involved in proton translocation. This chain is NADH-ubiquinone oxidoreductase chain 4L (MT-ND4L), found in Macaca mulatta (Rhesus macaque).